The sequence spans 577 residues: NKAP family protein UM04995 (577 aa).

The disordered stretch occupies residues 1-479; the sequence is MPTLAERLGS…YGGALLPGEG (479 aa). Basic and acidic residues predominate over residues 20–31; it reads KSSHDREQELRS. Polar residues predominate over residues 36 to 49; it reads SKQTSRNTAHQDLA. Over residues 50–60 the composition is skewed to basic and acidic residues; it reads SSERRSIDREL. Residues 70–89 are compositionally biased toward low complexity; the sequence is SPLSSPQNGSSPRRQRGSPS. 3 stretches are compositionally biased toward basic and acidic residues: residues 127–163, 170–193, and 265–297; these read PREDVQSDRSPRSYPRRRDDQRWQANERRANQDDSRR, SGDRRRYFDSNDDRNPRQEDREAP, and DSSSRHRDKDKDKDRDKDKGKRDRKHSSSDKHH. Composition is skewed to basic residues over residues 298–316 and 325–336; these read SSSRSHRHHSSTSRRRRSS and SRHRHTRSSRSH. Residues 340 to 350 are compositionally biased toward acidic residues; that stretch reads DDDDDDDEDVD. Over residues 363 to 385 the composition is skewed to basic and acidic residues; sequence KVSDGSDSGRSESETDSDSDARS. The span at 386-395 shows a compositional bias: basic residues; it reads SRHRRRHHKS. Composition is skewed to basic and acidic residues over residues 396–408 and 417–439; these read DRSSTHRRRESEK and SESESSLHSEHNQKETAKSRRDS. Positions 529–570 form a coiled coil; it reads RKENQVISAEEKRTMLRLQAEEKAKKEREIVSQFKELVDTLQ.

Belongs to the NKAP family.

In Mycosarcoma maydis (Corn smut fungus), this protein is NKAP family protein UM04995.